The chain runs to 689 residues: Ribonuclease J (689 aa).

Positions 1–88 (MTDNNQNNEN…RNYAQEELDS (88 aa)) are disordered. Positions 9–24 (ENHENSSENSKADEMR) are enriched in basic and acidic residues. Residues 56 to 78 (HHKKEHRPNKKPNNHHKQKHAKT) show a composition bias toward basic residues. N6-acetyllysine is present on residues K132 and K138. The Zn(2+) site is built by H206, H208, D210, H211, H275, and D297. Residues K321, K335, and K395 each carry the N6-acetyllysine modification. 498 to 502 (HVSGH) lines the substrate pocket. An N6-acetyllysine modification is found at K509. H524 is a Zn(2+) binding site. An N6-acetyllysine mark is found at K545, K632, and K647.

The protein belongs to the metallo-beta-lactamase superfamily. RNA-metabolizing metallo-beta-lactamase-like family. Bacterial RNase J subfamily. As to quaternary structure, homodimer. Homotetramer; dimer of homodimers. Interacts with RNA helicase RhpA, might be a member of a minimal RNA degradosome complex. The cofactor is Zn(2+). In terms of processing, acetylated on nine lysine residues. Some of the residues are acetylated by multiple different mechanisms. RimL is partially responsible for the acetylation of Lys-321, Lys-395 and Lys-647. HPB8_1270 homolog is partially responsible for the acetylation of Lys-321, Lys-395, Lys-509 and Lys-647. Acetyl-phosphate-mediated non-enzymatic acetylation pathway takes part in the acetylation of Lys-132, Lys-321, Lys-395, Lys-509 and Lys-647. Acetylation of the remaining residues Lys-138, Lys-335, Lys-545 and Lys-632 occurs by a yet undetermined mechanism. Acetylation on a number of these residues is important for growth regulation and proper cell morphology.

It localises to the cytoplasm. Its activity is regulated as follows. Catalytic activity is regulated by the balance between homodimers and homotetramers, with homotetramers being the active forms of this enzyme. Acetylation allosterically regulates the homooligomerization state and hence the catalytic activity. Functionally, an RNase that has 5'-3' exoribonuclease and endoribonuclease activity. Degrades 5'-monophosphorylated ssRNA and dsRNA, considerably more active on ssRNA. Association with RhpA significantly increases the dsRNase activity. Degrades RNA substrate with hairpin structures at both ends with low activity, but presence of RhpA significantly increases the activity on this substrate. Stimulates ATPase activity of RNA helicase RhpA. Involved in stabilization of mRNA but apparently not rRNA. The sequence is that of Ribonuclease J from Helicobacter pylori (strain ATCC 700392 / 26695) (Campylobacter pylori).